A 143-amino-acid chain; its full sequence is Transthyretin-like protein 33 (143 aa).

A signal peptide spans 1-20 (MSRLACISSLFILCAIGSEA).

This sequence belongs to the nematode transthyretin-like family. As to expression, expressed in head cells next to and anterior of the first pharyngeal bulb, the pharynx, and the hypodermis.

It is found in the secreted. Functionally, protects dopaminergic neurons from degeneration caused by oxidative stress. The chain is Transthyretin-like protein 33 from Caenorhabditis elegans.